Reading from the N-terminus, the 271-residue chain is Aminoglycoside N(3)-acetyltransferase III (271 aa).

CoA contacts are provided by H31, A32, S33, V34, and K35. Residues Y64, D72, and E102 each contribute to the a 2-deoxystreptamine antibiotic site. 3 residues coordinate CoA: S104, V105, and F109. A 2-deoxystreptamine antibiotic contacts are provided by E123, Y146, and D170. 2 residues coordinate CoA: T171 and T173. Residues H176, T212, G213, and F221 each contribute to the a 2-deoxystreptamine antibiotic site.

This sequence belongs to the antibiotic N-acetyltransferase family. As to quaternary structure, homodimer.

The enzyme catalyses a 2-deoxystreptamine antibiotic + acetyl-CoA = an N(3)-acetyl-2-deoxystreptamine antibiotic + CoA + H(+). Its function is as follows. Resistance to antibiotics containing the 2-deoxy-streptamine ring including dibekacin, gentamicin, kanamycin, sisomicin, tobramycin and neomycin, but not to amikacin or netilmicin. Acetylates a broad range of both 4,5- and 4,6-disubstituted aminoglycosides, including neomycin, paromomycin, ribostamycin, sisomicin, gentamicin, tobramycin and kanamycin, with no preference of one disubstitution over the other. Acetylates sisomicin and kanamycin most and least efficiently, respectively. Does not modify plazomicin. The sequence is that of Aminoglycoside N(3)-acetyltransferase III from Pseudomonas aeruginosa.